The following is a 763-amino-acid chain: Xaa-Pro dipeptidyl-peptidase (763 aa).

Catalysis depends on charge relay system residues Ser349, Asp469, and His499.

It belongs to the peptidase S15 family. As to quaternary structure, homodimer.

Its subcellular location is the cytoplasm. It catalyses the reaction Hydrolyzes Xaa-Pro-|- bonds to release unblocked, N-terminal dipeptides from substrates including Ala-Pro-|-p-nitroanilide and (sequentially) Tyr-Pro-|-Phe-Pro-|-Gly-Pro-|-Ile.. Functionally, removes N-terminal dipeptides sequentially from polypeptides having unsubstituted N-termini provided that the penultimate residue is proline. This is Xaa-Pro dipeptidyl-peptidase from Streptococcus macedonicus (Streptococcus gallolyticus macedonicus).